Consider the following 508-residue polypeptide: Photosystem II CP47 reaction center protein (508 aa).

The next 6 helical transmembrane spans lie at 21 to 36, 101 to 115, 140 to 156, 203 to 218, 237 to 252, and 457 to 472; these read SVHI…WAGS, IVFS…IWHW, GIHL…FGAF, IAAG…FHLS, VLSS…AFVV, and SFAL…HGAR.

Belongs to the PsbB/PsbC family. PsbB subfamily. PSII is composed of 1 copy each of membrane proteins PsbA, PsbB, PsbC, PsbD, PsbE, PsbF, PsbH, PsbI, PsbJ, PsbK, PsbL, PsbM, PsbT, PsbX, PsbY, PsbZ, Psb30/Ycf12, at least 3 peripheral proteins of the oxygen-evolving complex and a large number of cofactors. It forms dimeric complexes. Binds multiple chlorophylls. PSII binds additional chlorophylls, carotenoids and specific lipids. serves as cofactor.

It localises to the plastid. The protein resides in the chloroplast thylakoid membrane. One of the components of the core complex of photosystem II (PSII). It binds chlorophyll and helps catalyze the primary light-induced photochemical processes of PSII. PSII is a light-driven water:plastoquinone oxidoreductase, using light energy to abstract electrons from H(2)O, generating O(2) and a proton gradient subsequently used for ATP formation. This chain is Photosystem II CP47 reaction center protein, found in Vitis vinifera (Grape).